We begin with the raw amino-acid sequence, 911 residues long: Probable 2-oxoadipate dehydrogenase complex component E1 homolog (911 aa).

It belongs to the alpha-ketoglutarate dehydrogenase family. The cofactor is thiamine diphosphate.

Its subcellular location is the mitochondrion. The enzyme catalyses N(6)-[(R)-lipoyl]-L-lysyl-[protein] + 2-oxoadipate + H(+) = N(6)-[(R)-S(8)-glutaryldihydrolipoyl]-L-lysyl-[protein] + CO2. Functionally, 2-oxoadipate dehydrogenase (E1a) component of the 2-oxoadipate dehydrogenase complex (OADHC). Participates in the first step, rate limiting for the overall conversion of 2-oxoadipate (alpha-ketoadipate) to glutaryl-CoA and CO(2) catalyzed by the whole OADHC. Catalyzes the irreversible decarboxylation of 2-oxoadipate via the thiamine diphosphate (ThDP) cofactor and subsequent transfer of the decarboxylated acyl intermediate on an oxidized dihydrolipoyl group that is covalently amidated to the E2 enzyme (dihydrolipoyllysine-residue succinyltransferase or DLST). The sequence is that of Probable 2-oxoadipate dehydrogenase complex component E1 homolog from Caenorhabditis elegans.